Consider the following 955-residue polypeptide: Mediator of RNA polymerase II transcription subunit 16 (955 aa).

The disordered stretch occupies residues 855–874 (ALPETNANANANQNGKSSTQ). Over residues 857 to 873 (PETNANANANQNGKSST) the composition is skewed to polar residues.

It belongs to the Mediator complex subunit 16 family. In terms of assembly, component of the Mediator complex.

The protein resides in the nucleus. Component of the Mediator complex, a coactivator involved in the regulated transcription of nearly all RNA polymerase II-dependent genes. Mediator functions as a bridge to convey information from gene-specific regulatory proteins to the basal RNA polymerase II transcription machinery. Mediator is recruited to promoters by direct interactions with regulatory proteins and serves as a scaffold for the assembly of a functional preinitiation complex with RNA polymerase II and the general transcription factors. This is Mediator of RNA polymerase II transcription subunit 16 (sin4) from Aspergillus fumigatus (strain ATCC MYA-4609 / CBS 101355 / FGSC A1100 / Af293) (Neosartorya fumigata).